Reading from the N-terminus, the 1177-residue chain is Tyrosine-protein kinase hopscotch (1177 aa).

A disordered region spans residues 1–41; that stretch reads MALANGGEDRMDDSSSGRTSLADSASLTNSSLRSGTSSQSI. Residues 16–41 show a composition bias toward polar residues; sequence SGRTSLADSASLTNSSLRSGTSSQSI. Ser-40 and Ser-321 each carry phosphoserine. Residues 46–414 form the FERM domain; it reads GTIRVFNFTT…IYIRLSSKWM (369 aa). Positions 433–539 constitute an SH2; atypical domain; the sequence is HCHGPIGGAY…YRIPASKYDK (107 aa). 2 consecutive Protein kinase domains span residues 582–843 and 892–1164; these read YPDS…AEIL and YNME…HPTD. Residues 898–906 and Lys-926 each bind ATP; that span reads IGRGHYGTV. Residue Asp-1014 is the Proton acceptor of the active site. 2 positions are modified to phosphotyrosine; by autocatalysis: Tyr-1047 and Tyr-1048. The interval 1158–1177 is disordered; the sequence is KVTHPTDGHQSPPNQPTDAE.

The protein belongs to the protein kinase superfamily. Tyr protein kinase family. JAK subfamily. As to quaternary structure, forms a complex with Hsp83 and piwi; probably Hop mediates the interaction between piwi and Hsp83.

Its subcellular location is the endomembrane system. It carries out the reaction L-tyrosyl-[protein] + ATP = O-phospho-L-tyrosyl-[protein] + ADP + H(+). Functionally, tyrosine kinase of the non-receptor type, phosphorylates the marelle protein. Required maternally for the establishment of the normal array of embryonic segments: involved in the control of pair-rule gene transcription in a stripe-specific manner. Together with Hsp83 and piwi, mediates canalization, also known as developmental robustness, likely via epigenetic silencing of existing genetic variants and suppression of transposon-induced new genetic variation. In Drosophila melanogaster (Fruit fly), this protein is Tyrosine-protein kinase hopscotch (hop).